Here is a 705-residue protein sequence, read N- to C-terminus: 1,4-alpha-glucan branching enzyme GlgB (705 aa).

The Nucleophile role is filled by Asp393. Residue Glu446 is the Proton donor of the active site.

The protein belongs to the glycosyl hydrolase 13 family. GlgB subfamily. Monomer.

The catalysed reaction is Transfers a segment of a (1-&gt;4)-alpha-D-glucan chain to a primary hydroxy group in a similar glucan chain.. The protein operates within glycan biosynthesis; glycogen biosynthesis. Its function is as follows. Catalyzes the formation of the alpha-1,6-glucosidic linkages in glycogen by scission of a 1,4-alpha-linked oligosaccharide from growing alpha-1,4-glucan chains and the subsequent attachment of the oligosaccharide to the alpha-1,6 position. The chain is 1,4-alpha-glucan branching enzyme GlgB from Picrophilus torridus (strain ATCC 700027 / DSM 9790 / JCM 10055 / NBRC 100828 / KAW 2/3).